A 293-amino-acid chain; its full sequence is Phosphatidate cytidylyltransferase (293 aa).

8 helical membrane passes run 6–26, 51–71, 73–93, 97–117, 157–177, 195–215, 218–238, and 273–293; these read IISA…GGWY, IAPA…SATV, PHLT…YLLF, MATI…GYLP, LLVT…AYIM, VEGS…GAWY, WPYW…VSLL, and VFTA…LNNL.

The protein belongs to the CDS family.

It localises to the cell membrane. The catalysed reaction is a 1,2-diacyl-sn-glycero-3-phosphate + CTP + H(+) = a CDP-1,2-diacyl-sn-glycerol + diphosphate. It participates in phospholipid metabolism; CDP-diacylglycerol biosynthesis; CDP-diacylglycerol from sn-glycerol 3-phosphate: step 3/3. The chain is Phosphatidate cytidylyltransferase (cdsA) from Synechocystis sp. (strain ATCC 27184 / PCC 6803 / Kazusa).